The primary structure comprises 473 residues: Ribulose bisphosphate carboxylase large chain (473 aa).

Positions 116 and 166 each coordinate substrate. The active-site Proton acceptor is Lys-168. Residue Lys-170 participates in substrate binding. Mg(2+)-binding residues include Lys-194, Asp-196, and Glu-197. Position 194 is an N6-carboxylysine (Lys-194). His-287 (proton acceptor) is an active-site residue. Substrate-binding residues include Arg-288, His-320, and Ser-372.

Belongs to the RuBisCO large chain family. Type I subfamily. In terms of assembly, heterohexadecamer of 8 large chains and 8 small chains. It depends on Mg(2+) as a cofactor.

It catalyses the reaction 2 (2R)-3-phosphoglycerate + 2 H(+) = D-ribulose 1,5-bisphosphate + CO2 + H2O. The catalysed reaction is D-ribulose 1,5-bisphosphate + O2 = 2-phosphoglycolate + (2R)-3-phosphoglycerate + 2 H(+). In terms of biological role, ruBisCO catalyzes two reactions: the carboxylation of D-ribulose 1,5-bisphosphate, the primary event in carbon dioxide fixation, as well as the oxidative fragmentation of the pentose substrate. Both reactions occur simultaneously and in competition at the same active site. This is Ribulose bisphosphate carboxylase large chain from Nitrosomonas europaea (strain ATCC 19718 / CIP 103999 / KCTC 2705 / NBRC 14298).